We begin with the raw amino-acid sequence, 94 residues long: Large ribosomal subunit protein bL25 (94 aa).

The protein belongs to the bacterial ribosomal protein bL25 family. As to quaternary structure, part of the 50S ribosomal subunit; part of the 5S rRNA/L5/L18/L25 subcomplex. Contacts the 5S rRNA. Binds to the 5S rRNA independently of L5 and L18.

Functionally, this is one of the proteins that binds to the 5S RNA in the ribosome where it forms part of the central protuberance. The polypeptide is Large ribosomal subunit protein bL25 (Cronobacter sakazakii (strain ATCC BAA-894) (Enterobacter sakazakii)).